The primary structure comprises 207 residues: Uracil phosphoribosyltransferase (207 aa).

5-phospho-alpha-D-ribose 1-diphosphate is bound by residues arginine 77, arginine 102, and 129–137 (DPMLATGGS). Uracil contacts are provided by residues isoleucine 192 and 197 to 199 (GDA). Aspartate 198 provides a ligand contact to 5-phospho-alpha-D-ribose 1-diphosphate.

This sequence belongs to the UPRTase family. Mg(2+) serves as cofactor.

It carries out the reaction UMP + diphosphate = 5-phospho-alpha-D-ribose 1-diphosphate + uracil. It functions in the pathway pyrimidine metabolism; UMP biosynthesis via salvage pathway; UMP from uracil: step 1/1. With respect to regulation, allosterically activated by GTP. Functionally, catalyzes the conversion of uracil and 5-phospho-alpha-D-ribose 1-diphosphate (PRPP) to UMP and diphosphate. This Mycoplasma mycoides subsp. mycoides SC (strain CCUG 32753 / NCTC 10114 / PG1) protein is Uracil phosphoribosyltransferase.